The following is a 161-amino-acid chain: Arachidonate 5-lipoxygenase-activating protein (161 aa).

Topologically, residues 1–8 (MDQEAVGN) are lumenal. The chain crosses the membrane as a helical span at residues 9 to 30 (VVLLALVTLISVVQNAFFAHKV). Residues 31–52 (EHESKAHNGRSFQRTGTLAFER) lie on the Cytoplasmic side of the membrane. The chain crosses the membrane as a helical span at residues 53-77 (VYTANQNCVDAYPTFLVVLWTAGLL). The Lumenal segment spans residues 78–80 (CSQ). A helical membrane pass occupies residues 81–102 (VPAAFAGLMYLFVRQKYFVGYL). At 103–107 (GERTQ) the chain is on the cytoplasmic side. Residues 108 to 115 (STPGYIFG) lie within the membrane without spanning it. The helical transmembrane segment at 116-128 (KRIILFLFLMSFA) threads the bilayer. Residues 129 to 161 (GILNHYLIFFFGSDFENYIRTVSTTISPLLLIP) lie on the Lumenal side of the membrane.

It belongs to the MAPEG family. In terms of assembly, homotrimer. Interacts with LTC4S and ALOX5.

The protein localises to the nucleus membrane. It localises to the endoplasmic reticulum membrane. Its function is as follows. Required for leukotriene biosynthesis by ALOX5 (5-lipoxygenase). Anchors ALOX5 to the membrane. Binds arachidonic acid, and could play an essential role in the transfer of arachidonic acid to ALOX5. Binds to MK-886, a compound that blocks the biosynthesis of leukotrienes. This Mus musculus (Mouse) protein is Arachidonate 5-lipoxygenase-activating protein (Alox5ap).